A 392-amino-acid polypeptide reads, in one-letter code: MNLDRYRNIVRETERKYINVNPIQRGGVLTPEARKALLEFGDGYSVCDFCEGLLHEIEKPPIRQFHEDLAEFLGMDVVRITAGARYAKEAVMSALCEEGDVVVADSLAHYTTFVAAEKAGATVREVPNTGHPEYKVKVDEYARVIDEVEDERGDPPALALLTHVDSEYGNLADAEKFVKICRKKGVPALLNCAYTMGRMDLSNLSPKPDFMVGSGHKGMAACAPCGVLAMREEWEEEVLRGSSLRGDVSGREWPHKEVEMLGCTVMGAPIVTMMASFPHVVERVKRWKEEVRKTRWFVKEMERIEGVRQLGERPKRHDLVKFETPGFHEVAEDHPRRGYFLYEELKKRGVIGIQPGQTETIKASVYGLTDEQVEHVVRAFHEIAEEYGLEVS.

Pyridoxal 5'-phosphate contacts are provided by residues 84–85, asparagine 191, and 214–216; these read AR and SGH. The residue at position 217 (lysine 217) is an N6-(pyridoxal phosphate)lysine.

The protein belongs to the SepCysS family. Homodimer. Interacts with SepRS. The cofactor is pyridoxal 5'-phosphate.

The enzyme catalyses O-phospho-L-seryl-tRNA(Cys) + hydrogen sulfide + H(+) = L-cysteinyl-tRNA(Cys) + phosphate. Converts O-phospho-L-seryl-tRNA(Cys) (Sep-tRNA(Cys)) to L-cysteinyl-tRNA(Cys) (Cys-tRNA(Cys)). The protein is O-phospho-L-seryl-tRNA:Cys-tRNA synthase of Methanopyrus kandleri (strain AV19 / DSM 6324 / JCM 9639 / NBRC 100938).